Reading from the N-terminus, the 153-residue chain is 3-dehydroquinate dehydratase (153 aa).

The Proton acceptor role is filled by Tyr-26. The substrate site is built by Asn-77, His-83, and Asp-90. His-103 acts as the Proton donor in catalysis. Substrate contacts are provided by residues 104–105 (LS) and Arg-114.

The protein belongs to the type-II 3-dehydroquinase family. As to quaternary structure, homododecamer.

The enzyme catalyses 3-dehydroquinate = 3-dehydroshikimate + H2O. It participates in metabolic intermediate biosynthesis; chorismate biosynthesis; chorismate from D-erythrose 4-phosphate and phosphoenolpyruvate: step 3/7. In terms of biological role, catalyzes a trans-dehydration via an enolate intermediate. The polypeptide is 3-dehydroquinate dehydratase (Colwellia psychrerythraea (strain 34H / ATCC BAA-681) (Vibrio psychroerythus)).